Reading from the N-terminus, the 531-residue chain is 2-isopropylmalate synthase (531 aa).

Positions 8–284 (IIIFDTTLRD…LTNIDTKQIY (277 aa)) constitute a Pyruvate carboxyltransferase domain. Mn(2+) is bound by residues Asp17, His208, His210, and Asn244. The interval 408–531 (RVELVQVSCG…TQDKQTEVTA (124 aa)) is regulatory domain.

This sequence belongs to the alpha-IPM synthase/homocitrate synthase family. LeuA type 1 subfamily. As to quaternary structure, homodimer. The cofactor is Mn(2+).

Its subcellular location is the cytoplasm. It carries out the reaction 3-methyl-2-oxobutanoate + acetyl-CoA + H2O = (2S)-2-isopropylmalate + CoA + H(+). The protein operates within amino-acid biosynthesis; L-leucine biosynthesis; L-leucine from 3-methyl-2-oxobutanoate: step 1/4. Its function is as follows. Catalyzes the condensation of the acetyl group of acetyl-CoA with 3-methyl-2-oxobutanoate (2-ketoisovalerate) to form 3-carboxy-3-hydroxy-4-methylpentanoate (2-isopropylmalate). The polypeptide is 2-isopropylmalate synthase (Trichormus variabilis (strain ATCC 29413 / PCC 7937) (Anabaena variabilis)).